The following is a 429-amino-acid chain: Protein AST1 (429 aa).

Interacts with PMA1.

Its subcellular location is the cell membrane. The protein resides in the membrane raft. It is found in the golgi apparatus membrane. The protein localises to the late endosome membrane. Its function is as follows. Lipid raft-associated protein involved in the targeting of PMA1 from Golgi to the plasma membrane. May induce clustering of PMA1, which facilitates partition of PMA1 into lipid rafts after leaving the ER and its transport to the cell surface. The chain is Protein AST1 from Saccharomyces cerevisiae (strain ATCC 204508 / S288c) (Baker's yeast).